A 278-amino-acid polypeptide reads, in one-letter code: Sulfur carrier protein FdhD (278 aa).

Residue C121 is the Cysteine persulfide intermediate of the active site. 260-265 (FCKPGR) is a Mo-bis(molybdopterin guanine dinucleotide) binding site.

The protein belongs to the FdhD family.

The protein resides in the cytoplasm. In terms of biological role, required for formate dehydrogenase (FDH) activity. Acts as a sulfur carrier protein that transfers sulfur from IscS to the molybdenum cofactor prior to its insertion into FDH. The chain is Sulfur carrier protein FdhD from Escherichia coli O127:H6 (strain E2348/69 / EPEC).